Reading from the N-terminus, the 848-residue chain is Oligopeptide transport ATP-binding protein OppF (848 aa).

Residues V13 to I785 enclose the ABC transporter domain. G47–S54 lines the ATP pocket.

Belongs to the ABC transporter superfamily. In terms of assembly, the complex is composed of two ATP-binding proteins (OppD and OppF), two transmembrane proteins (OppB and OppC) and a solute-binding protein (OppA).

Its subcellular location is the cell membrane. The catalysed reaction is a [peptide](out) + ATP + H2O = a [peptide](in) + ADP + phosphate + H(+). In terms of biological role, part of the ABC transporter complex OppABCDF involved in the uptake of oligopeptides. Probably responsible for energy coupling to the transport system. In Mycoplasma genitalium (strain ATCC 33530 / DSM 19775 / NCTC 10195 / G37) (Mycoplasmoides genitalium), this protein is Oligopeptide transport ATP-binding protein OppF (oppF).